A 402-amino-acid chain; its full sequence is Tryptophan synthase beta chain 2 (402 aa).

Lys97 is modified (N6-(pyridoxal phosphate)lysine).

It belongs to the TrpB family. In terms of assembly, tetramer of two alpha and two beta chains. It depends on pyridoxal 5'-phosphate as a cofactor.

It catalyses the reaction (1S,2R)-1-C-(indol-3-yl)glycerol 3-phosphate + L-serine = D-glyceraldehyde 3-phosphate + L-tryptophan + H2O. It participates in amino-acid biosynthesis; L-tryptophan biosynthesis; L-tryptophan from chorismate: step 5/5. In terms of biological role, the beta subunit is responsible for the synthesis of L-tryptophan from indole and L-serine. This is Tryptophan synthase beta chain 2 (trpB2) from Wolinella succinogenes (strain ATCC 29543 / DSM 1740 / CCUG 13145 / JCM 31913 / LMG 7466 / NCTC 11488 / FDC 602W) (Vibrio succinogenes).